Here is a 40-residue protein sequence, read N- to C-terminus: Photosystem II reaction center protein J (40 aa).

The helical transmembrane segment at 8 to 28 (IPLWLVGTVAGILVIGLIGIF) threads the bilayer.

It belongs to the PsbJ family. In terms of assembly, PSII is composed of 1 copy each of membrane proteins PsbA, PsbB, PsbC, PsbD, PsbE, PsbF, PsbH, PsbI, PsbJ, PsbK, PsbL, PsbM, PsbT, PsbX, PsbY, PsbZ, Psb30/Ycf12, at least 3 peripheral proteins of the oxygen-evolving complex and a large number of cofactors. It forms dimeric complexes.

It localises to the plastid. It is found in the chloroplast thylakoid membrane. In terms of biological role, one of the components of the core complex of photosystem II (PSII). PSII is a light-driven water:plastoquinone oxidoreductase that uses light energy to abstract electrons from H(2)O, generating O(2) and a proton gradient subsequently used for ATP formation. It consists of a core antenna complex that captures photons, and an electron transfer chain that converts photonic excitation into a charge separation. The polypeptide is Photosystem II reaction center protein J (Gnetum parvifolium (Small-leaved jointfir)).